Here is a 515-residue protein sequence, read N- to C-terminus: Maturase K (515 aa).

It belongs to the intron maturase 2 family. MatK subfamily.

Its subcellular location is the plastid. It is found in the chloroplast. Functionally, usually encoded in the trnK tRNA gene intron. Probably assists in splicing its own and other chloroplast group II introns. This Pinus banksiana (Jack pine) protein is Maturase K.